Here is a 320-residue protein sequence, read N- to C-terminus: Melanocyte-stimulating hormone receptor (320 aa).

Topologically, residues M1–E40 are extracellular. N32 carries N-linked (GlcNAc...) asparagine glycosylation. A helical membrane pass occupies residues V41 to I66. Residues A67–P75 are Cytoplasmic-facing. A helical membrane pass occupies residues M76–L96. Over E97–N121 the chain is Extracellular. The helical transmembrane segment at V122 to V143 threads the bilayer. The Cytoplasmic segment spans residues D144–R166. Residues A167–Y186 traverse the membrane as a helical segment. Residues H187–G194 are Extracellular-facing. Residues L195–L214 traverse the membrane as a helical segment. Over A215–A243 the chain is Cytoplasmic. A helical membrane pass occupies residues A244–L269. Over C270–N282 the chain is Extracellular. Residues V283 to F303 form a helical membrane-spanning segment. The Cytoplasmic segment spans residues R304–W320.

Belongs to the G-protein coupled receptor 1 family. As to quaternary structure, interacts with MGRN1, but does not undergo MGRN1-mediated ubiquitination; this interaction competes with GNAS-binding and thus inhibits agonist-induced cAMP production. Interacts with OPN3; the interaction results in a decrease in MC1R-mediated cAMP signaling and ultimately a decrease in melanin production in melanocytes.

The protein localises to the cell membrane. In terms of biological role, receptor for MSH (alpha, beta and gamma) and ACTH. The activity of this receptor is mediated by G proteins which activate adenylate cyclase. Mediates melanogenesis, the production of eumelanin (black/brown) and phaeomelanin (red/yellow), via regulation of cAMP signaling in melanocytes. The chain is Melanocyte-stimulating hormone receptor (MC1R) from Sus scrofa (Pig).